The chain runs to 400 residues: Argininosuccinate synthase (400 aa).

Residues Ala11–Ser19 and Ala38 each bind ATP. L-citrulline contacts are provided by Tyr89 and Ser94. Gly119 contacts ATP. 3 residues coordinate L-aspartate: Thr121, Asn125, and Asp126. Asn125 provides a ligand contact to L-citrulline. L-citrulline-binding residues include Arg129, Ser179, Ser188, Glu264, and Tyr276.

Belongs to the argininosuccinate synthase family. Type 1 subfamily. In terms of assembly, homotetramer.

It localises to the cytoplasm. It carries out the reaction L-citrulline + L-aspartate + ATP = 2-(N(omega)-L-arginino)succinate + AMP + diphosphate + H(+). Its pathway is amino-acid biosynthesis; L-arginine biosynthesis; L-arginine from L-ornithine and carbamoyl phosphate: step 2/3. The protein is Argininosuccinate synthase of Oleidesulfovibrio alaskensis (strain ATCC BAA-1058 / DSM 17464 / G20) (Desulfovibrio alaskensis).